The primary structure comprises 301 residues: MGAQLSTLSHVVLSPVWFIYSLFMKLFQRSTPAITLENPDIKYPLRLIDKEVISPDTRRFRFALPSPQHILGLPIGQHIYLSTRIDGNLVIRPYTPVSSDDDKGFVDLVVKVYFKDTHPKFPAGGKMSQYLENMKIGDTIEFRGPNGLLVYQGKGKFAIRADKKSNPVVRTVKSVGMIAGGTGITPMLQVIRAVLKDPNDHTVCYLLFANQSEKDILLRPELEELRNEHSARFKLWYTVDKAPDAWDYSQGFVNEEMIRDHLPTPGEEPLILMCGPPPMIQFACLPNLERVGHPKERCFTF.

Residue G2 is the site of N-myristoyl glycine attachment. Residues D40–Q152 enclose the FAD-binding FR-type domain. An N6-acetyllysine modification is found at K42. Phosphotyrosine is present on Y43. Position 50 is an N6-acetyllysine (K50). The FAD site is built by R92, P93, Y94, V109, K111, and F114. K120 is subject to N6-acetyllysine. Residues K126, M127, S128, and T185 each coordinate FAD.

It belongs to the flavoprotein pyridine nucleotide cytochrome reductase family. Component of a complex composed of cytochrome b5, NADH-cytochrome b5 reductase (CYB5R3) and MTARC2. Interacts with MTLN; the interaction is required to maintain cellular lipid composition and leads to stimulation of mitochondrial respiratory complex I activity. It depends on FAD as a cofactor.

It is found in the endoplasmic reticulum membrane. Its subcellular location is the mitochondrion outer membrane. The enzyme catalyses 2 Fe(III)-[cytochrome b5] + NADH = 2 Fe(II)-[cytochrome b5] + NAD(+) + H(+). Catalyzes the reduction of two molecules of cytochrome b5 using NADH as the electron donor. This is NADH-cytochrome b5 reductase 3 from Mus musculus (Mouse).